We begin with the raw amino-acid sequence, 273 residues long: Nitrogenase iron protein (273 aa).

8–15 (GKGGIGKS) serves as a coordination point for ATP. Cys95 lines the [4Fe-4S] cluster pocket. Arg98 carries the post-translational modification ADP-ribosylarginine; by dinitrogenase reductase ADP-ribosyltransferase. Cys130 contributes to the [4Fe-4S] cluster binding site.

The protein belongs to the NifH/BchL/ChlL family. Homodimer. The cofactor is [4Fe-4S] cluster. In terms of processing, the reversible ADP-ribosylation of Arg-98 inactivates the nitrogenase reductase and regulates nitrogenase activity.

It carries out the reaction N2 + 8 reduced [2Fe-2S]-[ferredoxin] + 16 ATP + 16 H2O = H2 + 8 oxidized [2Fe-2S]-[ferredoxin] + 2 NH4(+) + 16 ADP + 16 phosphate + 6 H(+). Its function is as follows. The key enzymatic reactions in nitrogen fixation are catalyzed by the nitrogenase complex, which has 2 components: the iron protein and the molybdenum-iron protein. The polypeptide is Nitrogenase iron protein (Roseiflexus sp. (strain RS-1)).